We begin with the raw amino-acid sequence, 196 residues long: MKVILLERLEGWGGLGDVVDVKDGYARNFLLPRQKALRANGANLKVFEAQRAEIEARNAKAKEAAGKAGEKLDGTQYVLIRQAGESGQLYGSVSGRDVADAVNAEGGKVERSMVVLDKPIKTLGMHEVKIRLHSEVAVTVTLNIARSQDEADRQARGENVIASQFEDERMAAEQAAADLLEGGAGQQASEYTEAQA.

The disordered stretch occupies residues 174 to 196 (QAAADLLEGGAGQQASEYTEAQA). Residues 186-196 (QQASEYTEAQA) show a composition bias toward polar residues.

It belongs to the bacterial ribosomal protein bL9 family.

In terms of biological role, binds to the 23S rRNA. This chain is Large ribosomal subunit protein bL9, found in Phenylobacterium zucineum (strain HLK1).